The sequence spans 458 residues: A-type ATP synthase subunit B (458 aa).

Belongs to the ATPase alpha/beta chains family. In terms of assembly, has multiple subunits with at least A(3), B(3), C, D, E, F, H, I and proteolipid K(x).

It is found in the cell membrane. Component of the A-type ATP synthase that produces ATP from ADP in the presence of a proton gradient across the membrane. The B chain is a regulatory subunit. This is A-type ATP synthase subunit B from Methanocorpusculum labreanum (strain ATCC 43576 / DSM 4855 / Z).